The chain runs to 270 residues: Formamidopyrimidine-DNA glycosylase (270 aa).

The active-site Schiff-base intermediate with DNA is the Pro-2. Catalysis depends on Glu-3, which acts as the Proton donor. Catalysis depends on Lys-58, which acts as the Proton donor; for beta-elimination activity. DNA-binding residues include His-91, Arg-110, and Arg-151. Residues 236–270 (AVYGREGEPCTHCGAPLQGVRIGGRATIYCSQCQR) form an FPG-type zinc finger. The active-site Proton donor; for delta-elimination activity is the Arg-260.

The protein belongs to the FPG family. In terms of assembly, monomer. The cofactor is Zn(2+).

The enzyme catalyses Hydrolysis of DNA containing ring-opened 7-methylguanine residues, releasing 2,6-diamino-4-hydroxy-5-(N-methyl)formamidopyrimidine.. It catalyses the reaction 2'-deoxyribonucleotide-(2'-deoxyribose 5'-phosphate)-2'-deoxyribonucleotide-DNA = a 3'-end 2'-deoxyribonucleotide-(2,3-dehydro-2,3-deoxyribose 5'-phosphate)-DNA + a 5'-end 5'-phospho-2'-deoxyribonucleoside-DNA + H(+). Functionally, involved in base excision repair of DNA damaged by oxidation or by mutagenic agents. Acts as a DNA glycosylase that recognizes and removes damaged bases. Has a preference for oxidized purines, such as 7,8-dihydro-8-oxoguanine (8-oxoG). Has AP (apurinic/apyrimidinic) lyase activity and introduces nicks in the DNA strand. Cleaves the DNA backbone by beta-delta elimination to generate a single-strand break at the site of the removed base with both 3'- and 5'-phosphates. The sequence is that of Formamidopyrimidine-DNA glycosylase from Acidithiobacillus ferrooxidans (strain ATCC 23270 / DSM 14882 / CIP 104768 / NCIMB 8455) (Ferrobacillus ferrooxidans (strain ATCC 23270)).